Here is a 330-residue protein sequence, read N- to C-terminus: Copper-containing nitrite reductase (330 aa).

2 Plastocyanin-like domains span residues 1-165 (GLPR…YDRV) and 166-330 (YTIG…PGPA). 7 residues coordinate Cu cation: His85, His90, His125, Cys126, His135, Met140, and His296.

The protein belongs to the multicopper oxidase family. Homotrimer. Cu(2+) serves as cofactor. Cu(+) is required as a cofactor. It depends on FAD as a cofactor.

Its subcellular location is the periplasm. The enzyme catalyses nitric oxide + Fe(III)-[cytochrome c] + H2O = Fe(II)-[cytochrome c] + nitrite + 2 H(+). Its pathway is nitrogen metabolism; nitrate reduction (denitrification); dinitrogen from nitrate: step 2/4. The polypeptide is Copper-containing nitrite reductase (nirK) (Alcaligenes xylosoxydans xylosoxydans (Achromobacter xylosoxidans)).